A 257-amino-acid chain; its full sequence is Uridylate kinase (257 aa).

Residue K8 to G11 coordinates ATP. Positions G21–G26 are involved in allosteric activation by GTP. G56 contacts UMP. Residues G57 and R61 each contribute to the ATP site. Residues D75 and N136–T143 contribute to the UMP site. ATP-binding residues include N164, Y170, and D173.

It belongs to the UMP kinase family. As to quaternary structure, homohexamer.

It is found in the cytoplasm. It carries out the reaction UMP + ATP = UDP + ADP. It participates in pyrimidine metabolism; CTP biosynthesis via de novo pathway; UDP from UMP (UMPK route): step 1/1. With respect to regulation, allosterically activated by GTP. Inhibited by UTP. In terms of biological role, catalyzes the reversible phosphorylation of UMP to UDP. The polypeptide is Uridylate kinase (Deinococcus geothermalis (strain DSM 11300 / CIP 105573 / AG-3a)).